The primary structure comprises 308 residues: uncharacterized protein (308 aa).

7 consecutive transmembrane segments (helical) span residues I10–I30, L91–L111, L115–I135, V178–M198, I219–L239, L251–I271, and I288–F308.

It to M.jannaschii MJ0871, MJ1556 and MJ1589.

The protein localises to the cell membrane. This is an uncharacterized protein from Methanocaldococcus jannaschii (strain ATCC 43067 / DSM 2661 / JAL-1 / JCM 10045 / NBRC 100440) (Methanococcus jannaschii).